The sequence spans 491 residues: Monocarboxylate transport permease protein (491 aa).

Transmembrane regions (helical) follow at residues 7–27 (GTAL…GFVA), 55–75 (WFLV…PALV), 83–103 (FFAL…MPVL), 130–150 (LAVA…QLVG), 157–177 (ALGL…ALYT), 187–207 (LIAF…VALI), 246–266 (LALG…GIFA), 277–297 (AIML…GYMG), 322–342 (WFSG…AAVM), 374–396 (ITSL…QFAL), 400–422 (LLGG…TNWF), 427–447 (LLAG…DAGW), and 465–485 (GLLA…LLPA).

This sequence belongs to the sodium:solute symporter (SSF) (TC 2.A.21) family.

It localises to the cell membrane. Its activity is regulated as follows. Inhibited by CCCP, but is apparently not affected by the concentration of sodium. Its function is as follows. Low-affinity transporter of alanine and high-affinity transporter of lactate and pyruvate. Can also transport other monocarboxylates such as propionate, butyrate, alpha-hydroxybutyrate or acetate. May be proton coupled. Required for optimal growth on alanine or pyruvate and ammonia. In Rhizobium johnstonii (strain DSM 114642 / LMG 32736 / 3841) (Rhizobium leguminosarum bv. viciae), this protein is Monocarboxylate transport permease protein.